A 323-amino-acid polypeptide reads, in one-letter code: Zinc finger C2HC domain-containing protein 1A (323 aa).

The C2HC/C3H-type 1 zinc finger occupies 14–43; it reads ELLPCKICGRTFFPVALKKHGPICQKTATK. Residues Cys18, Cys21, His33, and Cys37 each coordinate Zn(2+). The tract at residues 42-81 is disordered; sequence TKKRKTFDSSRQRAEGTDIPTVKPLKPRPEPPKKPSNWRR. The span at 47–57 shows a compositional bias: basic and acidic residues; the sequence is TFDSSRQRAEG. A C2HC/C3H-type 2 zinc finger spans residues 117–146; sequence DYIQCPYCQRRFNENAADRHINFCKEQAAR. Zn(2+) contacts are provided by Cys121, Cys124, His136, and Cys140. Residues 149 to 258 are disordered; that stretch reads NKGKFSTDTK…NPASGVLTSK (110 aa). The span at 177–197 shows a compositional bias: polar residues; that stretch reads SPGTTSSGSSRLPQPSGTSKT. Residues 198-214 are compositionally biased toward low complexity; that stretch reads VVGAPSGKVSSVSSSSG. At Ser221 the chain carries Phosphoserine. Thr242 bears the Phosphothreonine mark. Ser290 is subject to Phosphoserine.

Belongs to the ZC2HC1 family. The cofactor is Zn(2+).

This chain is Zinc finger C2HC domain-containing protein 1A (ZC2HC1A), found in Bos taurus (Bovine).